An 859-amino-acid polypeptide reads, in one-letter code: Protein translocase subunit SecA (859 aa).

ATP is bound by residues glutamine 88, 106–110 (GEGKT), and aspartate 496. The segment at 818–838 (FSHQPQSEVKVSRNDPCPCGS) is disordered. Cysteine 834, cysteine 836, cysteine 845, and cysteine 846 together coordinate Zn(2+).

Belongs to the SecA family. In terms of assembly, monomer and homodimer. Part of the essential Sec protein translocation apparatus which comprises SecA, SecYEG and auxiliary proteins SecDF-YajC and YidC. It depends on Zn(2+) as a cofactor.

Its subcellular location is the cell inner membrane. It localises to the cytoplasm. The enzyme catalyses ATP + H2O + cellular proteinSide 1 = ADP + phosphate + cellular proteinSide 2.. Functionally, part of the Sec protein translocase complex. Interacts with the SecYEG preprotein conducting channel. Has a central role in coupling the hydrolysis of ATP to the transfer of proteins into and across the cell membrane, serving as an ATP-driven molecular motor driving the stepwise translocation of polypeptide chains across the membrane. The chain is Protein translocase subunit SecA from Wolinella succinogenes (strain ATCC 29543 / DSM 1740 / CCUG 13145 / JCM 31913 / LMG 7466 / NCTC 11488 / FDC 602W) (Vibrio succinogenes).